Reading from the N-terminus, the 296-residue chain is Fructose-bisphosphate aldolase class 1 (296 aa).

Catalysis depends on glutamate 175, which acts as the Proton acceptor. Residue lysine 212 is the Schiff-base intermediate with dihydroxyacetone-P of the active site.

It belongs to the class I fructose-bisphosphate aldolase family.

The enzyme catalyses beta-D-fructose 1,6-bisphosphate = D-glyceraldehyde 3-phosphate + dihydroxyacetone phosphate. The protein operates within carbohydrate degradation; glycolysis; D-glyceraldehyde 3-phosphate and glycerone phosphate from D-glucose: step 4/4. The polypeptide is Fructose-bisphosphate aldolase class 1 (Staphylococcus aureus (strain MRSA252)).